The sequence spans 752 residues: MAP/microtubule affinity-regulating kinase 4 (752 aa).

The interval 1-36 (MSSRTVLAPGNDRNSDTHGTLGSGRSSDKGPSWSSR) is disordered. The region spanning 59–310 (YRLLRTIGKG…LEQIMKDKWI (252 aa)) is the Protein kinase domain. Residues 65 to 73 (IGKGNFAKV) and K88 contribute to the ATP site. D181 serves as the catalytic Proton acceptor. T214 is subject to Phosphothreonine; by LKB1. A UBA domain is found at 324-368 (EPEEDFGDTKRIEVMVGMGYTREEIKESLTSQKYNEVTATYLLLG). The tract at residues 385–614 (ARVRAPSDTT…PAGRPRPTTN (230 aa)) is disordered. Low complexity predominate over residues 391-406 (SDTTNGTSSSKGTSHS). Phosphoserine occurs at positions 423 and 543. The span at 544–553 (PSSHSLAPPS) shows a compositional bias: low complexity. A KA1 domain is found at 703–752 (AGGPEPLSHFEVEVCQLPRPGLRGVLFRRVAGTALAFRTLVTRISNDLEL).

It belongs to the protein kinase superfamily. CAMK Ser/Thr protein kinase family. SNF1 subfamily. Interacts with MAPT/TAU. Interacts with gamma-tubulin. Interacts with ODF2. Interacts with USP9X. Interacts with YWHAQ. Interacts with NLRP3; promoting NLRP3 recruitment to microtubule organizing center (MTOC). Mg(2+) is required as a cofactor. Ubiquitinated with 'Lys-29'- and 'Lys-33'-linked polyubiquitins which appear to impede LKB1-mediated phosphorylation. Deubiquitinated by USP9X. In terms of processing, phosphorylated at Thr-214 by STK11/LKB1 in complex with STE20-related adapter-alpha (STRADA) pseudo kinase and CAB39. Phosphorylated throughout the cell cycle. Ubiquitous. Isoform 2 is brain-specific. Expressed at highest levels in brain and testis. Also expressed in heart, lung, liver, muscle, kidney and spleen.

It localises to the cytoplasm. The protein resides in the cytoskeleton. It is found in the microtubule organizing center. Its subcellular location is the centrosome. The protein localises to the cilium basal body. It localises to the cilium axoneme. The protein resides in the cell projection. It is found in the dendrite. The catalysed reaction is L-seryl-[protein] + ATP = O-phospho-L-seryl-[protein] + ADP + H(+). It carries out the reaction L-threonyl-[protein] + ATP = O-phospho-L-threonyl-[protein] + ADP + H(+). Its activity is regulated as follows. Activated by phosphorylation on Thr-214. Serine/threonine-protein kinase. Phosphorylates the microtubule-associated protein MAPT/TAU. Also phosphorylates the microtubule-associated proteins MAP2 and MAP4. Involved in regulation of the microtubule network, causing reorganization of microtubules into bundles. Required for the initiation of axoneme extension during cilium assembly. Regulates the centrosomal location of ODF2 and phosphorylates ODF2 in vitro. Plays a role in cell cycle progression, specifically in the G1/S checkpoint. Reduces neuronal cell survival. Plays a role in energy homeostasis by regulating satiety and metabolic rate. Promotes adipogenesis by activating JNK1 and inhibiting the p38MAPK pathway, and triggers apoptosis by activating the JNK1 pathway. Phosphorylates mTORC1 complex member RPTOR and acts as a negative regulator of the mTORC1 complex, probably due to disruption of the interaction between phosphorylated RPTOR and the RRAGA/RRAGC heterodimer which is required for mTORC1 activation. Involved in NLRP3 positioning along microtubules by mediating NLRP3 recruitment to microtubule organizing center (MTOC) upon inflammasome activation. This is MAP/microtubule affinity-regulating kinase 4 from Homo sapiens (Human).